We begin with the raw amino-acid sequence, 337 residues long: Adenosine deaminase (337 aa).

2 residues coordinate Zn(2+): His-15 and His-17. Positions 17, 19, and 172 each coordinate substrate. His-199 provides a ligand contact to Zn(2+). Residue Glu-202 is the Proton donor of the active site. Zn(2+) is bound at residue Asp-279.

Belongs to the metallo-dependent hydrolases superfamily. Adenosine and AMP deaminases family. Adenosine deaminase subfamily. It depends on Zn(2+) as a cofactor.

It catalyses the reaction adenosine + H2O + H(+) = inosine + NH4(+). It carries out the reaction 2'-deoxyadenosine + H2O + H(+) = 2'-deoxyinosine + NH4(+). Catalyzes the hydrolytic deamination of adenosine and 2-deoxyadenosine. The polypeptide is Adenosine deaminase (Enterococcus faecalis (strain ATCC 700802 / V583)).